The primary structure comprises 156 residues: Translation initiation factor IF-1, chloroplastic (156 aa).

Positions 1 to 35 (MAASLTLMTSPPCSRSSKSPSPSPSPSLSCNQQQQ) are disordered. A chloroplast-targeting transit peptide spans 1–49 (MAASLTLMTSPPCSRSSKSPSPSPSPSLSCNQQQQYKPLLHHQWPPQIS). Residues 10–20 (SPPCSRSSKSP) show a composition bias toward low complexity. The region spanning 72–148 (GGSPSVQEQK…TRGRITYRLR (77 aa)) is the S1-like domain.

Belongs to the IF-1 family. As to quaternary structure, component of the 30S ribosomal translation pre-initiation complex which assembles on the 30S ribosome in the order IF-2 and IF-3, IF-1 and N-formylmethionyl-tRNA(fMet); mRNA recruitment can occur at any time during PIC assembly.

The protein resides in the plastid. It localises to the chloroplast. Functionally, one of the essential components for the initiation of protein synthesis. Stabilizes the binding of IF-2 and IF-3 on the 30S subunit to which N-formylmethionyl-tRNA(fMet) subsequently binds. Helps modulate mRNA selection, yielding the 30S pre-initiation complex (PIC). Upon addition of the 50S ribosomal subunit IF-1, IF-2 and IF-3 are released leaving the mature 70S translation initiation complex. The chain is Translation initiation factor IF-1, chloroplastic (infA) from Mesembryanthemum crystallinum (Common ice plant).